The chain runs to 120 residues: ATP synthase subunit a (120 aa).

4 helical membrane-spanning segments follow: residues 2-22, 29-49, 59-79, and 94-116; these read FFYS…YSYL, FFPF…VGIV, LNIT…LGFY, and IPFV…RSVG.

It belongs to the ATPase A chain family. F-type ATPases have 2 components, CF(1) - the catalytic core - and CF(0) - the membrane proton channel. CF(1) has five subunits: alpha(3), beta(3), gamma(1), delta(1), epsilon(1). CF(0) has three main subunits: a, b and c.

It is found in the mitochondrion inner membrane. Mitochondrial membrane ATP synthase (F(1)F(0) ATP synthase or Complex V) produces ATP from ADP in the presence of a proton gradient across the membrane which is generated by electron transport complexes of the respiratory chain. F-type ATPases consist of two structural domains, F(1) - containing the extramembraneous catalytic core and F(0) - containing the membrane proton channel, linked together by a central stalk and a peripheral stalk. During catalysis, ATP synthesis in the catalytic domain of F(1) is coupled via a rotary mechanism of the central stalk subunits to proton translocation. Key component of the proton channel; it may play a direct role in the translocation of protons across the membrane. The sequence is that of ATP synthase subunit a (ATP6) from Naegleria fowleri (Brain eating amoeba).